Reading from the N-terminus, the 219-residue chain is ATP synthase subunit a (219 aa).

6 helical membrane-spanning segments follow: residues 16–36 (LSNWLSMLIPLLFMVMSFWLI), 57–79 (LLMGPASFGANILVIALFLFILF), 96–116 (LAVTLSLAVPLWISFILYTWI), 122–142 (ALAHLVPLGTPAPLMPFMVLM), 158–178 (LAANMIAGHLLLTLLGAQGTL), and 184–204 (TSIVVFSQIILLMLEFSVAII).

It belongs to the ATPase A chain family. In terms of assembly, F-type ATPases have 2 components, CF(1) - the catalytic core - and CF(0) - the membrane proton channel. CF(1) has five subunits: alpha(3), beta(3), gamma(1), delta(1), epsilon(1). CF(0) has three main subunits: a, b and c.

It is found in the mitochondrion inner membrane. In terms of biological role, mitochondrial membrane ATP synthase (F(1)F(0) ATP synthase or Complex V) produces ATP from ADP in the presence of a proton gradient across the membrane which is generated by electron transport complexes of the respiratory chain. F-type ATPases consist of two structural domains, F(1) - containing the extramembraneous catalytic core and F(0) - containing the membrane proton channel, linked together by a central stalk and a peripheral stalk. During catalysis, ATP synthesis in the catalytic domain of F(1) is coupled via a rotary mechanism of the central stalk subunits to proton translocation. Key component of the proton channel; it may play a direct role in the translocation of protons across the membrane. This Artemia franciscana (Brine shrimp) protein is ATP synthase subunit a (ATP6).